The primary structure comprises 325 residues: tRNA-dihydrouridine(16) synthase (325 aa).

FMN contacts are provided by residues 12-14 and Gln-73; that span reads PMQ. Cys-103 (proton donor) is an active-site residue. FMN is bound by residues Lys-144, 205 to 207, and 229 to 230; these read NGE and GR.

Belongs to the Dus family. DusC subfamily. Requires FMN as cofactor.

The enzyme catalyses 5,6-dihydrouridine(16) in tRNA + NADP(+) = uridine(16) in tRNA + NADPH + H(+). It catalyses the reaction 5,6-dihydrouridine(16) in tRNA + NAD(+) = uridine(16) in tRNA + NADH + H(+). Its function is as follows. Catalyzes the synthesis of 5,6-dihydrouridine (D), a modified base found in the D-loop of most tRNAs, via the reduction of the C5-C6 double bond in target uridines. Specifically modifies U16 in tRNAs. The sequence is that of tRNA-dihydrouridine(16) synthase from Haemophilus ducreyi (strain 35000HP / ATCC 700724).